Here is a 101-residue protein sequence, read N- to C-terminus: Secreted enzymes activator (101 aa).

Positions 1 to 10 (MSRRRRRASA) are enriched in basic residues. Disordered regions lie at residues 1–26 (MSRRRRRASATRRSAAVSPPHTPYGS) and 45–101 (TRLA…NGRG). The span at 45-60 (TRLAASSRASRAAVGS) shows a compositional bias: low complexity. Residues 55–74 (RAAVGSFDGAKNRPASSRRQ) constitute a DNA-binding region (H-T-H motif).

In terms of biological role, increases the production of several extracellular enzymes, like alkaline phosphatase, amylase, protease or lipase. When present in high concentrations, delays the production of pigments and sporulation. The chain is Secreted enzymes activator (saf) from Streptomyces griseus.